The chain runs to 352 residues: UDP-N-acetylglucosamine--N-acetylmuramyl-(pentapeptide) pyrophosphoryl-undecaprenol N-acetylglucosamine transferase (352 aa).

The UDP-N-acetyl-alpha-D-glucosamine site is built by Ser-195 and Gln-287.

Belongs to the glycosyltransferase 28 family. MurG subfamily.

It is found in the cell membrane. The enzyme catalyses Mur2Ac(oyl-L-Ala-gamma-D-Glu-L-Lys-D-Ala-D-Ala)-di-trans,octa-cis-undecaprenyl diphosphate + UDP-N-acetyl-alpha-D-glucosamine = beta-D-GlcNAc-(1-&gt;4)-Mur2Ac(oyl-L-Ala-gamma-D-Glu-L-Lys-D-Ala-D-Ala)-di-trans,octa-cis-undecaprenyl diphosphate + UDP + H(+). It participates in cell wall biogenesis; peptidoglycan biosynthesis. Its function is as follows. Cell wall formation. Catalyzes the transfer of a GlcNAc subunit on undecaprenyl-pyrophosphoryl-MurNAc-pentapeptide (lipid intermediate I) to form undecaprenyl-pyrophosphoryl-MurNAc-(pentapeptide)GlcNAc (lipid intermediate II). The sequence is that of UDP-N-acetylglucosamine--N-acetylmuramyl-(pentapeptide) pyrophosphoryl-undecaprenol N-acetylglucosamine transferase from Streptococcus pneumoniae (strain 70585).